The primary structure comprises 60 residues: uncharacterized protein (60 aa).

This is an uncharacterized protein from Thermotoga maritima (strain ATCC 43589 / DSM 3109 / JCM 10099 / NBRC 100826 / MSB8).